The primary structure comprises 214 residues: Alkaline phosphatase-like protein (214 aa).

3 helical membrane-spanning segments follow: residues 48 to 68, 141 to 161, and 177 to 197; these read LGIIGMIIAATIGSVLGALIL, FLILTTLGTLIWNIVLVCLGA, and YSSVVVVILGIIFILAILIFV.

This sequence belongs to the DedA family.

The protein localises to the cell membrane. The chain is Alkaline phosphatase-like protein (apl) from Lactococcus lactis subsp. lactis (strain IL1403) (Streptococcus lactis).